The chain runs to 256 residues: Imidazole glycerol phosphate synthase subunit HisF (256 aa).

Catalysis depends on residues aspartate 12 and aspartate 131.

The protein belongs to the HisA/HisF family. In terms of assembly, heterodimer of HisH and HisF.

It is found in the cytoplasm. It carries out the reaction 5-[(5-phospho-1-deoxy-D-ribulos-1-ylimino)methylamino]-1-(5-phospho-beta-D-ribosyl)imidazole-4-carboxamide + L-glutamine = D-erythro-1-(imidazol-4-yl)glycerol 3-phosphate + 5-amino-1-(5-phospho-beta-D-ribosyl)imidazole-4-carboxamide + L-glutamate + H(+). The protein operates within amino-acid biosynthesis; L-histidine biosynthesis; L-histidine from 5-phospho-alpha-D-ribose 1-diphosphate: step 5/9. Its function is as follows. IGPS catalyzes the conversion of PRFAR and glutamine to IGP, AICAR and glutamate. The HisF subunit catalyzes the cyclization activity that produces IGP and AICAR from PRFAR using the ammonia provided by the HisH subunit. This Beutenbergia cavernae (strain ATCC BAA-8 / DSM 12333 / CCUG 43141 / JCM 11478 / NBRC 16432 / NCIMB 13614 / HKI 0122) protein is Imidazole glycerol phosphate synthase subunit HisF.